The following is an 873-amino-acid chain: Valine--tRNA ligase (873 aa).

The 'HIGH' region signature appears at 43 to 53 (PNVTGVLHMGH). The 'KMSKS' region motif lies at 532 to 536 (KMSKS). Position 535 (Lys535) interacts with ATP. Positions 802–873 (LGNLINVEEE…IEESIAALTK (72 aa)) form a coiled coil.

The protein belongs to the class-I aminoacyl-tRNA synthetase family. ValS type 1 subfamily. Monomer.

Its subcellular location is the cytoplasm. The enzyme catalyses tRNA(Val) + L-valine + ATP = L-valyl-tRNA(Val) + AMP + diphosphate. Its function is as follows. Catalyzes the attachment of valine to tRNA(Val). As ValRS can inadvertently accommodate and process structurally similar amino acids such as threonine, to avoid such errors, it has a 'posttransfer' editing activity that hydrolyzes mischarged Thr-tRNA(Val) in a tRNA-dependent manner. The protein is Valine--tRNA ligase of Parabacteroides distasonis (strain ATCC 8503 / DSM 20701 / CIP 104284 / JCM 5825 / NCTC 11152).